Here is a 231-residue protein sequence, read N- to C-terminus: Large ribosomal subunit protein uL1 (231 aa).

Belongs to the universal ribosomal protein uL1 family. Part of the 50S ribosomal subunit.

In terms of biological role, binds directly to 23S rRNA. The L1 stalk is quite mobile in the ribosome, and is involved in E site tRNA release. Its function is as follows. Protein L1 is also a translational repressor protein, it controls the translation of the L11 operon by binding to its mRNA. This Paracidovorax citrulli (strain AAC00-1) (Acidovorax citrulli) protein is Large ribosomal subunit protein uL1.